We begin with the raw amino-acid sequence, 958 residues long: Collagen alpha-1(I) chain (958 aa).

The interval 1-958 is disordered; it reads GPMGPSGPRG…PGPPGPPGPP (958 aa). Basic and acidic residues predominate over residues 50-64; the sequence is NGDDGEAGKPGRPGE. Phosphoserine is present on S92. Composition is skewed to low complexity over residues 100–116 and 139–152; these read DAGPAGPKGEPGSPGEN and PAGARGNDGATGAA. Residues 154–166 are compositionally biased toward pro residues; it reads PPGPTGPAGPPGF. Residues 216-232 are compositionally biased toward low complexity; that stretch reads APGIAGAPGFPGARGPS. The span at 294 to 303 shows a compositional bias: gly residues; the sequence is GERGGPGSRG. 8 stretches are compositionally biased toward low complexity: residues 304-335, 347-373, 382-401, 557-571, 584-614, 640-656, 685-694, and 704-728; these read FPGSDGVAGPKGPAGERGAPGPAGPKGSPGEA, KGITGSPGSPGPDGKTGPPGPAGQDGR, ARGQAGVMGFPGPKGAAGEP, SGPSGPAGPTGARGA, AGFAGPPGADGQPGAKGEPGDAGAKGDAGPA, SAGPPGATGFPGAAGRV, ETGPAGRPGE, and AGEKGSPGADGPAGAPGTPGPQGIA. The residue at position 560 (S560) is a Phosphoserine. 2 stretches are compositionally biased toward pro residues: residues 769–779 and 808–823; these read PPGPVGPPGIA and AGPPGAPGAPGAPGPV. Over residues 859–873 the composition is skewed to basic and acidic residues; that stretch reads RGDKGETGEQGDRGI. Residues 892-925 show a composition bias toward low complexity; the sequence is PGEQGPSGASGPAGPRGPPGSAGAPGKDGINGIP. Residues 943–958 show a composition bias toward pro residues; sequence VGPPGPPGPPGPPGPP.

The protein belongs to the fibrillar collagen family. In terms of assembly, trimers of one alpha 2(I) and two alpha 1(I) chains. Prolines at the third position of the tripeptide repeating unit (G-X-Y) are hydroxylated in some or all of the chains. Forms the fibrils of tendon, ligaments and bones. In bones, the fibrils are mineralized with calcium hydroxyapatite.

The protein localises to the secreted. Its subcellular location is the extracellular space. It is found in the extracellular matrix. Its function is as follows. Type I collagen is a member of group I collagen (fibrillar forming collagen). This is Collagen alpha-1(I) chain from Macrauchenia sp.